Consider the following 336-residue polypeptide: MIVLGLETSCDETGLALYDSELGLRGQVLYSQIKLHAEYGGVVPELASRDHVRKLIPLMNQLLEQSGVKKQEIDAVAYTRGPGLMGALMTGALFGRTLAFSLNKPAIGVHHMEGHMLAPLLSSQPPEFPFVALLVSGGHTQLMAAHGIGQYELLGESIDDAAGEAFDKVAKMMNLPYPGGPNIAKLALSGDPLAFEFPRPMLHQGLDFSFSGLKTAVSVQLKKLNGENRDADIAASFQEAIVDTLVKKSVKALKQTGLKRLVIAGGVSANLRLREQLETSLAKIKAQVYYAEPALCTDNGAMIAFAGYQRLKAGQHDGLAVTTTPRWPMTELTIPE.

Residues His-111 and His-115 each coordinate Fe cation. Substrate-binding positions include 134–138 (LVSGG), Asp-167, Gly-180, and Asn-270. Residue Asp-298 participates in Fe cation binding.

Belongs to the KAE1 / TsaD family. Fe(2+) serves as cofactor.

The protein resides in the cytoplasm. The enzyme catalyses L-threonylcarbamoyladenylate + adenosine(37) in tRNA = N(6)-L-threonylcarbamoyladenosine(37) in tRNA + AMP + H(+). In terms of biological role, required for the formation of a threonylcarbamoyl group on adenosine at position 37 (t(6)A37) in tRNAs that read codons beginning with adenine. Is involved in the transfer of the threonylcarbamoyl moiety of threonylcarbamoyl-AMP (TC-AMP) to the N6 group of A37, together with TsaE and TsaB. TsaD likely plays a direct catalytic role in this reaction. This chain is tRNA N6-adenosine threonylcarbamoyltransferase, found in Acinetobacter baumannii (strain AB307-0294).